The sequence spans 212 residues: dTTP/UTP pyrophosphatase (212 aa).

D88 serves as the catalytic Proton acceptor.

It belongs to the Maf family. YhdE subfamily. A divalent metal cation is required as a cofactor.

It is found in the cytoplasm. It carries out the reaction dTTP + H2O = dTMP + diphosphate + H(+). The enzyme catalyses UTP + H2O = UMP + diphosphate + H(+). Functionally, nucleoside triphosphate pyrophosphatase that hydrolyzes dTTP and UTP. May have a dual role in cell division arrest and in preventing the incorporation of modified nucleotides into cellular nucleic acids. This Colwellia psychrerythraea (strain 34H / ATCC BAA-681) (Vibrio psychroerythus) protein is dTTP/UTP pyrophosphatase.